We begin with the raw amino-acid sequence, 79 residues long: Dolichyl-diphosphooligosaccharide--protein glycosyltransferase subunit TMEM258 (79 aa).

2 consecutive transmembrane segments (helical) span residues 17 to 37 and 55 to 75; these read VFPH…AWFF and LISL…LLWV.

Belongs to the OST5 family. As to quaternary structure, component of the oligosaccharyltransferase (OST) complex.

Its subcellular location is the membrane. The protein resides in the endoplasmic reticulum. The protein localises to the cytoplasm. It participates in protein modification; protein glycosylation. Subunit of the oligosaccharyl transferase (OST) complex that catalyzes the initial transfer of a defined glycan (Glc(3)Man(9)GlcNAc(2) in eukaryotes) from the lipid carrier dolichol-pyrophosphate to an asparagine residue within an Asn-X-Ser/Thr consensus motif in nascent polypeptide chains, the first step in protein N-glycosylation. N-glycosylation occurs cotranslationally and the complex associates with the Sec61 complex at the channel-forming translocon complex that mediates protein translocation across the endoplasmic reticulum (ER). All subunits are required for a maximal enzyme activity. The chain is Dolichyl-diphosphooligosaccharide--protein glycosyltransferase subunit TMEM258 from Xenopus laevis (African clawed frog).